The following is a 501-amino-acid chain: Pentatricopeptide repeat-containing protein At4g14190, chloroplastic (501 aa).

The transit peptide at 1–88 (MENLTTAQFL…SGSCPLRLLQ (88 aa)) directs the protein to the chloroplast. 5 PPR repeats span residues 130-160 (SENN…MIDD), 166-200 (SLEI…GLLP), 201-235 (ITET…GCVR), 236-270 (DHVT…KMTL), and 271-305 (EPST…GISL).

This sequence belongs to the PPR family. P subfamily.

It is found in the plastid. Its subcellular location is the chloroplast. This chain is Pentatricopeptide repeat-containing protein At4g14190, chloroplastic, found in Arabidopsis thaliana (Mouse-ear cress).